Consider the following 326-residue polypeptide: N-acetyl-gamma-glutamyl-phosphate reductase (326 aa).

Cysteine 155 is a catalytic residue.

This sequence belongs to the NAGSA dehydrogenase family. Type 1 subfamily.

The protein localises to the cytoplasm. It carries out the reaction N-acetyl-L-glutamate 5-semialdehyde + phosphate + NADP(+) = N-acetyl-L-glutamyl 5-phosphate + NADPH + H(+). It participates in amino-acid biosynthesis; L-arginine biosynthesis; N(2)-acetyl-L-ornithine from L-glutamate: step 3/4. Catalyzes the NADPH-dependent reduction of N-acetyl-5-glutamyl phosphate to yield N-acetyl-L-glutamate 5-semialdehyde. This chain is N-acetyl-gamma-glutamyl-phosphate reductase, found in Shewanella woodyi (strain ATCC 51908 / MS32).